The sequence spans 459 residues: Bifunctional protein GlmU (459 aa).

Residues 1–230 form a pyrophosphorylase region; the sequence is MSNRFAVILA…FDETLGVNDR (230 aa). Residues 9–12, lysine 23, glutamine 73, and 78–79 each bind UDP-N-acetyl-alpha-D-glucosamine; these read LAAG and GT. Aspartate 103 serves as a coordination point for Mg(2+). Residues glycine 140, glutamate 155, asparagine 170, and asparagine 228 each coordinate UDP-N-acetyl-alpha-D-glucosamine. Asparagine 228 is a Mg(2+) binding site. Residues 231–251 are linker; that stretch reads VALSQAEIIMKNRINRKNMVN. Positions 252 to 459 are N-acetyltransferase; that stretch reads GVTIIDPSNT…VDQLLNKKKS (208 aa). Residues arginine 333 and lysine 351 each coordinate UDP-N-acetyl-alpha-D-glucosamine. The Proton acceptor role is filled by histidine 363. Tyrosine 366 and asparagine 377 together coordinate UDP-N-acetyl-alpha-D-glucosamine. Acetyl-CoA-binding positions include 386 to 387, alanine 423, and arginine 440; that span reads NY.

This sequence in the N-terminal section; belongs to the N-acetylglucosamine-1-phosphate uridyltransferase family. It in the C-terminal section; belongs to the transferase hexapeptide repeat family. Homotrimer. It depends on Mg(2+) as a cofactor.

Its subcellular location is the cytoplasm. It catalyses the reaction alpha-D-glucosamine 1-phosphate + acetyl-CoA = N-acetyl-alpha-D-glucosamine 1-phosphate + CoA + H(+). The catalysed reaction is N-acetyl-alpha-D-glucosamine 1-phosphate + UTP + H(+) = UDP-N-acetyl-alpha-D-glucosamine + diphosphate. It functions in the pathway nucleotide-sugar biosynthesis; UDP-N-acetyl-alpha-D-glucosamine biosynthesis; N-acetyl-alpha-D-glucosamine 1-phosphate from alpha-D-glucosamine 6-phosphate (route II): step 2/2. It participates in nucleotide-sugar biosynthesis; UDP-N-acetyl-alpha-D-glucosamine biosynthesis; UDP-N-acetyl-alpha-D-glucosamine from N-acetyl-alpha-D-glucosamine 1-phosphate: step 1/1. The protein operates within bacterial outer membrane biogenesis; LPS lipid A biosynthesis. Catalyzes the last two sequential reactions in the de novo biosynthetic pathway for UDP-N-acetylglucosamine (UDP-GlcNAc). The C-terminal domain catalyzes the transfer of acetyl group from acetyl coenzyme A to glucosamine-1-phosphate (GlcN-1-P) to produce N-acetylglucosamine-1-phosphate (GlcNAc-1-P), which is converted into UDP-GlcNAc by the transfer of uridine 5-monophosphate (from uridine 5-triphosphate), a reaction catalyzed by the N-terminal domain. The polypeptide is Bifunctional protein GlmU (Bacillus cereus (strain ATCC 14579 / DSM 31 / CCUG 7414 / JCM 2152 / NBRC 15305 / NCIMB 9373 / NCTC 2599 / NRRL B-3711)).